We begin with the raw amino-acid sequence, 316 residues long: Phosphatidylinositol mannoside acyltransferase (316 aa).

His-137 functions as the Proton acceptor in the catalytic mechanism. Positions 137 and 175 each coordinate hexadecanoyl-CoA. The active site involves Glu-211. A hexadecanoyl-CoA-binding site is contributed by Glu-240.

This sequence belongs to the LpxL/LpxM/LpxP family.

It localises to the cell inner membrane. It carries out the reaction a 2,6-O-bis(alpha-D-mannopyranosyl)-1-phosphatidyl-1D-myo-inositol + an acyl-CoA = a 2-O-(alpha-D-mannosyl)-6-O-(6-O-acyl-alpha-D-mannosyl)-1-phosphatidyl-1D-myo-inositol + CoA. The enzyme catalyses a 1,2-diacyl-sn-glycero-3-phospho-[alpha-D-mannopyranosyl-(1&lt;-&gt;6)-D-myo-inositol] + an acyl-CoA = a 1,2-diacyl-sn-glycero-3-phospho-[alpha-D-6-acyl-mannopyranosyl-(1&lt;-&gt;6)-D-myo-inositol] + CoA. It functions in the pathway phospholipid metabolism; phosphatidylinositol metabolism. Catalyzes the transfer of a palmitoyl moiety from palmitoyl-CoA to the 6-position of the mannose ring linked to the 2-position of myo-inositol in phosphatidyl-myo-inositol monomannoside (PIM1) or dimannoside (PIM2). The sequence is that of Phosphatidylinositol mannoside acyltransferase from Mycobacterium tuberculosis (strain CDC 1551 / Oshkosh).